Consider the following 550-residue polypeptide: Hydroxylamine reductase (550 aa).

[2Fe-2S] cluster contacts are provided by cysteine 3, cysteine 6, cysteine 18, and cysteine 25. The hybrid [4Fe-2O-2S] cluster site is built by histidine 249, glutamate 273, cysteine 317, cysteine 405, cysteine 433, cysteine 458, glutamate 492, and lysine 494. Residue cysteine 405 is modified to Cysteine persulfide.

This sequence belongs to the HCP family. [2Fe-2S] cluster serves as cofactor. The cofactor is hybrid [4Fe-2O-2S] cluster.

The protein localises to the cytoplasm. It carries out the reaction A + NH4(+) + H2O = hydroxylamine + AH2 + H(+). Its function is as follows. Catalyzes the reduction of hydroxylamine to form NH(3) and H(2)O. This is Hydroxylamine reductase from Salmonella choleraesuis (strain SC-B67).